Here is a 323-residue protein sequence, read N- to C-terminus: ADP-L-glycero-D-manno-heptose-6-epimerase (323 aa).

NADP(+)-binding positions include 10-11 (FI), 31-32 (DN), Lys-38, Arg-53, 75-79 (MGACS), and Asn-92. Catalysis depends on Tyr-143, which acts as the Proton acceptor. Lys-147 is a binding site for NADP(+). Asn-170 provides a ligand contact to substrate. Residues Val-171 and Lys-179 each coordinate NADP(+). Lys-179 (proton acceptor) is an active-site residue. Residues Asp-181, Lys-188, 202 to 205 (FRSC), Arg-216, and Tyr-281 contribute to the substrate site.

This sequence belongs to the NAD(P)-dependent epimerase/dehydratase family. HldD subfamily. As to quaternary structure, homopentamer. NADP(+) serves as cofactor.

The enzyme catalyses ADP-D-glycero-beta-D-manno-heptose = ADP-L-glycero-beta-D-manno-heptose. It functions in the pathway nucleotide-sugar biosynthesis; ADP-L-glycero-beta-D-manno-heptose biosynthesis; ADP-L-glycero-beta-D-manno-heptose from D-glycero-beta-D-manno-heptose 7-phosphate: step 4/4. Functionally, catalyzes the interconversion between ADP-D-glycero-beta-D-manno-heptose and ADP-L-glycero-beta-D-manno-heptose via an epimerization at carbon 6 of the heptose. This Nitratidesulfovibrio vulgaris (strain DP4) (Desulfovibrio vulgaris) protein is ADP-L-glycero-D-manno-heptose-6-epimerase.